Here is a 372-residue protein sequence, read N- to C-terminus: Sesquiterpene synthase Agr9 (372 aa).

Mg(2+)-binding residues include D87, N225, S229, and E233. Residues 87–91 (DEYTD) carry the DDXXD motif motif. R314 and Y315 together coordinate (2E,6E)-farnesyl diphosphate.

The protein belongs to the terpene synthase family. Mg(2+) serves as cofactor.

It catalyses the reaction (2E,6E)-farnesyl diphosphate = gamma-muurolene + diphosphate. It carries out the reaction (2E,6E)-farnesyl diphosphate = delta-cadinene + diphosphate. In terms of biological role, terpene cyclase that catalyzes the cyclization of farnesyl diphosphate (FPP) to various sesquiterpenes, including gamma-muurolene, beta-cadinene and delta-cadinene. This is Sesquiterpene synthase Agr9 from Cyclocybe aegerita (Black poplar mushroom).